A 305-amino-acid chain; its full sequence is Acyl transferase (305 aa).

Active-site charge relay system residues include Ser114, Asp211, and His241.

Belongs to the LuxD family.

It functions in the pathway lipid metabolism; fatty acid reduction for biolumincescence. Its function is as follows. Acyl transferase is part of the fatty acid reductase system required for aldehyde biosynthesis; it produces fatty acids for the luminescent reaction. This Vibrio campbellii (strain ATCC BAA-1116) protein is Acyl transferase.